Consider the following 67-residue polypeptide: Beta-defensin 1 (67 aa).

The N-terminal stretch at M1–G22 is a signal peptide. 3 cysteine pairs are disulfide-bonded: C33/C62, C40/C55, and C45/C63.

As to quaternary structure, monomer. Homodimer. In terms of tissue distribution, highly expressed in tongue, nasopharyngeal mucosa and skin, and to a lower extent in the Eustachian tube, lung and trachea.

The protein localises to the secreted. Its subcellular location is the membrane. Has antibacterial activity against Gram-positive bacterium S.pneumoniae Serotype 14. Is also active against Gram-negative bacteria M.catarrhalis 1857, and non-typeable H.influenzae strains 86-028NP and 1128. Has antifungal activity against C.albicans. May have a role in maintaining sterility in the middle ear. May act as a ligand for C-C chemokine receptor CCR6. Positively regulates the sperm motility and bactericidal activity in a CCR6-dependent manner. Binds to CCR6 and triggers Ca2+ mobilization in the sperm which is important for its motility. This Chinchilla lanigera (Long-tailed chinchilla) protein is Beta-defensin 1 (DEFB1).